The primary structure comprises 146 residues: Large ribosomal subunit protein uL15 (146 aa).

The segment covering 1-10 has biased composition (basic and acidic residues); the sequence is MTLKLHDLRP. Residues 1–41 form a disordered region; that stretch reads MTLKLHDLRPARGSKIARTRVGRGDGSKGKTAGRGTKGTRA.

This sequence belongs to the universal ribosomal protein uL15 family. In terms of assembly, part of the 50S ribosomal subunit.

In terms of biological role, binds to the 23S rRNA. The sequence is that of Large ribosomal subunit protein uL15 from Mycobacterium tuberculosis (strain ATCC 25177 / H37Ra).